Consider the following 268-residue polypeptide: Mitochondrial distribution and morphology protein 12 (268 aa).

The SMP-LTD domain occupies 1 to 266; the sequence is MSIDLEWCKL…FPNFHTIVMA (266 aa). The interval 66 to 136 is disordered; that stretch reads EDDEEGSDRG…PPPAENPHPN (71 aa). Residues 102–111 are compositionally biased toward polar residues; that stretch reads PATNVTSSLD. Positions 112 to 121 are enriched in basic and acidic residues; it reads TRSDQPDDQK.

It belongs to the MDM12 family. Component of the ER-mitochondria encounter structure (ERMES) or MDM complex, composed of MMM1, MDM10, MDM12 and MDM34. An MMM1 homodimer associates with one molecule of MDM12 on each side in a pairwise head-to-tail manner, and the SMP-LTD domains of MMM1 and MDM12 generate a continuous hydrophobic tunnel for phospholipid trafficking.

It is found in the mitochondrion outer membrane. The protein localises to the endoplasmic reticulum membrane. Its function is as follows. Component of the ERMES/MDM complex, which serves as a molecular tether to connect the endoplasmic reticulum (ER) and mitochondria. Components of this complex are involved in the control of mitochondrial shape and protein biogenesis, and function in nonvesicular lipid trafficking between the ER and mitochondria. MDM12 is required for the interaction of the ER-resident membrane protein MMM1 and the outer mitochondrial membrane-resident beta-barrel protein MDM10. The MDM12-MMM1 subcomplex functions in the major beta-barrel assembly pathway that is responsible for biogenesis of all mitochondrial outer membrane beta-barrel proteins, and acts in a late step after the SAM complex. The MDM10-MDM12-MMM1 subcomplex further acts in the TOM40-specific pathway after the action of the MDM12-MMM1 complex. Essential for establishing and maintaining the structure of mitochondria and maintenance of mtDNA nucleoids. The protein is Mitochondrial distribution and morphology protein 12 of Laccaria bicolor (strain S238N-H82 / ATCC MYA-4686) (Bicoloured deceiver).